The primary structure comprises 126 residues: Apolipoprotein C-IV (126 aa).

Positions 1 to 27 are cleaved as a signal peptide; that stretch reads MSLLRHRLQALPSLCLCVLVLACIGAC.

This sequence belongs to the apolipoprotein C4 family.

It is found in the secreted. Its function is as follows. May participate in lipoprotein metabolism. The sequence is that of Apolipoprotein C-IV (APOC4) from Aotus nancymaae (Ma's night monkey).